Consider the following 266-residue polypeptide: Glucosamine-6-phosphate deaminase (266 aa).

Aspartate 72 acts as the Proton acceptor; for enolization step in catalysis. The For ring-opening step role is filled by aspartate 141. Histidine 143 acts as the Proton acceptor; for ring-opening step in catalysis. Glutamate 148 functions as the For ring-opening step in the catalytic mechanism.

Belongs to the glucosamine/galactosamine-6-phosphate isomerase family. NagB subfamily. In terms of assembly, homohexamer.

It carries out the reaction alpha-D-glucosamine 6-phosphate + H2O = beta-D-fructose 6-phosphate + NH4(+). It participates in amino-sugar metabolism; N-acetylneuraminate degradation; D-fructose 6-phosphate from N-acetylneuraminate: step 5/5. Allosterically activated by N-acetylglucosamine 6-phosphate (GlcNAc6P). Its function is as follows. Catalyzes the reversible isomerization-deamination of glucosamine 6-phosphate (GlcN6P) to form fructose 6-phosphate (Fru6P) and ammonium ion. The sequence is that of Glucosamine-6-phosphate deaminase from Pectobacterium atrosepticum (strain SCRI 1043 / ATCC BAA-672) (Erwinia carotovora subsp. atroseptica).